Here is an 893-residue protein sequence, read N- to C-terminus: Protein bride of sevenless (893 aa).

A signal peptide spans 1 to 30 (MSGLQLIWKSPTQLVLFVLLITISCIDLCH). Over 32-530 (VGAATPTKKS…RIKLDTWVAT (499 aa)) the chain is Extracellular. Disordered regions lie at residues 36 to 66 (TPTKKSPPVRITKPQPVSSTTTAIPTTNEGS) and 82 to 102 (GTASSASSSSNGGSDDSSSTT). Over residues 50–66 (QPVSSTTTAIPTTNEGS) the composition is skewed to polar residues. N-linked (GlcNAc...) asparagine glycosylation is found at Asn183, Asn307, Asn328, Asn471, and Asn482. The next 8 helical transmembrane spans lie at 531–551 (GLTAAILGLIATLAILVFIVV), 563–583 (PVTSILLLLSLILVFCSFVPF), 607–627 (LCGVRVFIMTLVYCFVFSLLL), 630–650 (AVMLASIGSEGGFLSHVNGYI), 653–673 (IICVLSVFVQVGMSVQLLVVM), 692–712 (WGLLAYDFLLLCSLVSLVPFI), 722–742 (GILIVIGAVLILIIWSVWIAL), and 752–772 (AAIPLGMQASGWAVLVGILIP). The Cytoplasmic segment spans residues 773–893 (RTFLIVRGIE…SPDHSKITRF (121 aa)). Positions 858–893 (ANINPQRPPPHPQQSPSRSSVCSLPPSPDHSKITRF) are disordered.

Belongs to the G-protein coupled receptor 3 family.

It localises to the cell membrane. Its function is as follows. Acts as a ligand for sevenless tyrosine-kinase receptor during eye development. The protein is Protein bride of sevenless (boss) of Drosophila virilis (Fruit fly).